A 354-amino-acid chain; its full sequence is Dihydroorotate dehydrogenase (quinone) (354 aa).

FMN-binding positions include 70 to 74 (AGFDK) and Thr94. A substrate-binding site is contributed by Lys74. 119–123 (NAMGF) contributes to the substrate binding site. 2 residues coordinate FMN: Asn148 and Asn181. Asn181 serves as a coordination point for substrate. The Nucleophile role is filled by Ser184. Residue Asn186 participates in substrate binding. Residues Lys217 and Thr245 each coordinate FMN. 246-247 (NT) serves as a coordination point for substrate. Residues Gly265, Gly294, and 315–316 (YS) each bind FMN.

This sequence belongs to the dihydroorotate dehydrogenase family. Type 2 subfamily. As to quaternary structure, monomer. FMN serves as cofactor.

The protein resides in the cell membrane. It carries out the reaction (S)-dihydroorotate + a quinone = orotate + a quinol. It functions in the pathway pyrimidine metabolism; UMP biosynthesis via de novo pathway; orotate from (S)-dihydroorotate (quinone route): step 1/1. Its function is as follows. Catalyzes the conversion of dihydroorotate to orotate with quinone as electron acceptor. The chain is Dihydroorotate dehydrogenase (quinone) from Sulfurovum sp. (strain NBC37-1).